Here is a 480-residue protein sequence, read N- to C-terminus: MAASAVCRAACSGTQALLRTCRSPALLRLPALRGTATFVQALQSVPETQVSVLDNGLRVASEQSSHPTCTVGVWIDVGSRYETEKNNGAGYFLEHLAFKGTKNRPGNALEKEVESIGAHLNAYSTREHTAYLIKALSKDLPKVVELLADIVQNISLEDSQIEKERDVILREMQENDASMQNVVFDYLHATAFQGTPLAQAVEGPSENVRRLSRTDLTDYLSRHYKAPRMVLAAAGGVKHQQLLDLAQDHFSSVSQVYEEDAVPSITPCRFTGSEIRHRDDALPLAHVAIAVEGPGWANPDNVALQVANAIIGHYDCTYGGGVHLSSPLASVAVANKLCQSFQTFNISYSETGLLGAHFVCDAMSIDDMIFFLQGQWMRLCTSATESEVTRGKNILRNALISHLDGTTPVCEDIGRSLLTYGRRIPLAEWESRIEEVDAQMVREVCSKYFYDQCPAVAGYGPIEQLSDYNRIRSGMFWLRF.

The transit peptide at 1-34 directs the protein to the mitochondrion; it reads MAASAVCRAACSGTQALLRTCRSPALLRLPALRG. An N6-acetyllysine mark is found at lysine 111 and lysine 138. At lysine 163 the chain carries N6-acetyllysine; alternate. Lysine 163 carries the post-translational modification N6-succinyllysine; alternate. At serine 212 the chain carries Phosphoserine. Residue threonine 214 is modified to Phosphothreonine.

Belongs to the peptidase M16 family. UQCRC1/QCR1 subfamily. As to quaternary structure, component of the ubiquinol-cytochrome c oxidoreductase (cytochrome b-c1 complex, complex III, CIII), a multisubunit enzyme composed of 11 subunits. The complex is composed of 3 respiratory subunits cytochrome b, cytochrome c1 and Rieske protein UQCRFS1, 2 core protein subunits UQCRC1/QCR1 and UQCRC2/QCR2, and 6 low-molecular weight protein subunits UQCRH/QCR6, UQCRB/QCR7, UQCRQ/QCR8, UQCR10/QCR9, UQCR11/QCR10 and subunit 9, the cleavage product of Rieske protein UQCRFS1. The complex exists as an obligatory dimer and forms supercomplexes (SCs) in the inner mitochondrial membrane with NADH-ubiquinone oxidoreductase (complex I, CI) and cytochrome c oxidase (complex IV, CIV), resulting in different assemblies (supercomplex SCI(1)III(2)IV(1) and megacomplex MCI(2)III(2)IV(2)). Interacts with UQCC6. Interacts with STMP1.

It localises to the mitochondrion inner membrane. In terms of biological role, component of the ubiquinol-cytochrome c oxidoreductase, a multisubunit transmembrane complex that is part of the mitochondrial electron transport chain which drives oxidative phosphorylation. The respiratory chain contains 3 multisubunit complexes succinate dehydrogenase (complex II, CII), ubiquinol-cytochrome c oxidoreductase (cytochrome b-c1 complex, complex III, CIII) and cytochrome c oxidase (complex IV, CIV), that cooperate to transfer electrons derived from NADH and succinate to molecular oxygen, creating an electrochemical gradient over the inner membrane that drives transmembrane transport and the ATP synthase. The cytochrome b-c1 complex catalyzes electron transfer from ubiquinol to cytochrome c, linking this redox reaction to translocation of protons across the mitochondrial inner membrane, with protons being carried across the membrane as hydrogens on the quinol. In the process called Q cycle, 2 protons are consumed from the matrix, 4 protons are released into the intermembrane space and 2 electrons are passed to cytochrome c. The 2 core subunits UQCRC1/QCR1 and UQCRC2/QCR2 are homologous to the 2 mitochondrial-processing peptidase (MPP) subunits beta-MPP and alpha-MPP respectively, and they seem to have preserved their MPP processing properties. May be involved in the in situ processing of UQCRFS1 into the mature Rieske protein and its mitochondrial targeting sequence (MTS)/subunit 9 when incorporated into complex III. Seems to play an important role in the maintenance of proper mitochondrial function in nigral dopaminergic neurons. The polypeptide is Cytochrome b-c1 complex subunit 1, mitochondrial (Uqcrc1) (Rattus norvegicus (Rat)).